Here is a 574-residue protein sequence, read N- to C-terminus: MNSSLTVQRRGSDAELGPWVMAARSKDAALSQRDGVLPVKVEEDSPGSWEPSYPAAWPDPETSRLHFRQLRYQEVAGPEEALSRLRELCRRWLRPELLSKEQILELLVLEQFLTILPEELQAWVREHCPESGEEAVAVVRALQRALDGTSPQGMVTFEDMAVSLTWEEWERLDPARRDFCRESAQKDSGSTVPPSLESRVENKELIPMQQILEEVEPQGQLQEAFQGKHPLFSKCGSTHEDRVEKQSGNPLPLKLENSAEAEGLNSISDVNKNGSIEGEDSKNNELQNSARCSNLVLCQHIPKAERPTDGEEHGNKCKQSFHMVAWHVLKPHKSDSGDSFHHSSFFETQRQLHEERPYKCGNCGKSFKQRSDLFRHQRIHTGEKPYGCQECGKSFSQSAALTKHQRTHTGEKPYTCLKCGERFRQNSHLNRHQSTHSRDKHFKCEECGETCRISNLFRHQRLHKGERPYKCEECKKSFKQRSDLFKHHRIHTGEKPYGCSVCGKRFNQSATLIKHQRIHTGEKPYKCLECGERFRQSTHLIRHQRIHQNKMLSVGRGAHACNPSPLGGQGRRII.

S12 carries the post-translational modification Phosphoserine. Residue K40 forms a Glycyl lysine isopeptide (Lys-Gly) (interchain with G-Cter in SUMO2) linkage. One can recognise an SCAN box domain in the interval 64 to 146 (RLHFRQLRYQ…AVVRALQRAL (83 aa)). Residues 155-230 (VTFEDMAVSL…LQEAFQGKHP (76 aa)) form the KRAB domain. The disordered stretch occupies residues 182-202 (ESAQKDSGSTVPPSLESRVEN). Residues K203, K228, and K254 each participate in a glycyl lysine isopeptide (Lys-Gly) (interchain with G-Cter in SUMO2) cross-link. Residues 231 to 284 (LFSKCGSTHEDRVEKQSGNPLPLKLENSAEAEGLNSISDVNKNGSIEGEDSKNN) form a disordered region. Positions 265 to 274 (NSISDVNKNG) are enriched in polar residues. K282 participates in a covalent cross-link: Glycyl lysine isopeptide (Lys-Gly) (interchain with G-Cter in SUMO2). 7 consecutive C2H2-type zinc fingers follow at residues 358–380 (YKCG…QRIH), 386–408 (YGCQ…QRTH), 414–436 (YTCL…QSTH), 442–463 (FKCE…QRLH), 469–491 (YKCE…HRIH), 497–519 (YGCS…QRIH), and 525–547 (YKCL…QRIH). A Glycyl lysine isopeptide (Lys-Gly) (interchain with G-Cter in SUMO2) cross-link involves residue K443.

This sequence belongs to the krueppel C2H2-type zinc-finger protein family.

The protein resides in the nucleus. Its function is as follows. May be involved in transcriptional regulation. The sequence is that of Zinc finger protein 394 (ZNF394) from Pongo abelii (Sumatran orangutan).